The primary structure comprises 816 residues: Transducer protein Htr18 (816 aa).

2 consecutive transmembrane segments (helical) span residues 21–41 (VVIV…TQAV) and 282–302 (NIVV…LVIG). The region spanning 303–356 (RDALTALTDMSDRAEAIAAGDIDTAIEETTRIDEVGDLRRSFRDIQEYLQTVAG) is the HAMP 1 domain. A disordered region spans residues 399-425 (DAQETAEQSRKEAEQSREEAEALAAAL). A compositionally biased stretch (basic and acidic residues) spans 405–418 (EQSRKEAEQSREEA). The region spanning 423-476 (AALESQAQDIRETVEHAADGDLTQRLETDTDHESMAAIATALNSLLEELEGTIH) is the HAMP 2 domain. Residues 495 to 731 (SAEEVKRASG…EVVTMVDEVG (237 aa)) form the Methyl-accepting transducer domain. The interval 790-816 (GGAENTTGAFVRSASTDHSRDATHHDT) is disordered. Residues 793 to 803 (ENTTGAFVRSA) show a composition bias toward polar residues. Positions 804-816 (STDHSRDATHHDT) are enriched in basic and acidic residues.

This sequence belongs to the methyl-accepting chemotaxis (MCP) protein family. In terms of processing, methylated by CheR.

It is found in the cell membrane. Functionally, potentially involved in chemo- or phototactic signal transduction. This is Transducer protein Htr18 (htr18) from Halobacterium salinarum (strain ATCC 29341 / DSM 671 / R1).